The following is a 313-amino-acid chain: tRNA dimethylallyltransferase (313 aa).

14-21 contributes to the ATP binding site; it reads GPTASGKT. 16–21 serves as a coordination point for substrate; sequence TASGKT. Interaction with substrate tRNA stretches follow at residues 39 to 42 and 163 to 167; these read DSAL and QRIGR.

It belongs to the IPP transferase family. As to quaternary structure, monomer. Mg(2+) serves as cofactor.

The enzyme catalyses adenosine(37) in tRNA + dimethylallyl diphosphate = N(6)-dimethylallyladenosine(37) in tRNA + diphosphate. In terms of biological role, catalyzes the transfer of a dimethylallyl group onto the adenine at position 37 in tRNAs that read codons beginning with uridine, leading to the formation of N6-(dimethylallyl)adenosine (i(6)A). The protein is tRNA dimethylallyltransferase of Thiobacillus denitrificans (strain ATCC 25259 / T1).